We begin with the raw amino-acid sequence, 396 residues long: MAKAKFERTKPHVNIGTIGHVDHGKTTLTAAITKVLHDKYPDLNESRAFDQIDNAPEERQRGITINISHVEYQTDKRHYAHVDAPGHADYIKNMITGAAQMDGAILVVAATDGPMPQTREHVLLARQVGVPYILVALNKADMVDDEELLELVEMEVRELLAAQEFDEDAPVVRVSALKALEGDAKWVESVEQLMEAVDESIPDPVRETDKPFLMPVEDVFTITGRGTVVTGRVERGVINVNEEVEIVGIRPSSTKTTVTGVEMFRKLLDQGQAGDNVGLLLRGIKREDVERGQVVTKPGTTTPHTEFEGQVYILSKDEGGRHTPFFNNYRPQFYFRTTDVTGVVTLPEGTEMVMPGDNTNISVKLIQPVAMDEGLRFAIREGGRTVGAGRVVKIIK.

The 196-residue stretch at 10 to 205 (KPHVNIGTIG…AVDESIPDPV (196 aa)) folds into the tr-type G domain. Residues 19 to 26 (GHVDHGKT) form a G1 region. GTP is bound at residue 19–26 (GHVDHGKT). Residue Thr26 participates in Mg(2+) binding. The G2 stretch occupies residues 62-66 (GITIN). The segment at 83–86 (DAPG) is G3. GTP-binding positions include 83-87 (DAPGH) and 138-141 (NKAD). The segment at 138-141 (NKAD) is G4. The G5 stretch occupies residues 175 to 177 (SAL).

It belongs to the TRAFAC class translation factor GTPase superfamily. Classic translation factor GTPase family. EF-Tu/EF-1A subfamily. As to quaternary structure, monomer.

Its subcellular location is the cytoplasm. It catalyses the reaction GTP + H2O = GDP + phosphate + H(+). In terms of biological role, GTP hydrolase that promotes the GTP-dependent binding of aminoacyl-tRNA to the A-site of ribosomes during protein biosynthesis. This Mycobacterium avium (strain 104) protein is Elongation factor Tu.